The following is a 183-amino-acid chain: Large ribosomal subunit protein uL6 (183 aa).

The protein belongs to the universal ribosomal protein uL6 family. As to quaternary structure, part of the 50S ribosomal subunit.

Functionally, this protein binds to the 23S rRNA, and is important in its secondary structure. It is located near the subunit interface in the base of the L7/L12 stalk, and near the tRNA binding site of the peptidyltransferase center. This chain is Large ribosomal subunit protein uL6, found in Chlamydia pneumoniae (Chlamydophila pneumoniae).